Here is an 84-residue protein sequence, read N- to C-terminus: Cell division topological specificity factor (84 aa).

It belongs to the MinE family.

Functionally, prevents the cell division inhibition by proteins MinC and MinD at internal division sites while permitting inhibition at polar sites. This ensures cell division at the proper site by restricting the formation of a division septum at the midpoint of the long axis of the cell. The chain is Cell division topological specificity factor from Granulibacter bethesdensis (strain ATCC BAA-1260 / CGDNIH1).